The primary structure comprises 904 residues: Disks large homolog 1 (904 aa).

The L27 domain maps to 4–64 (RKQDTQRALH…FYEVTLLDNP (61 aa)). T115 carries the post-translational modification Phosphothreonine. Residues S122, S138, and S158 each carry the phosphoserine modification. The interval 162 to 212 (PTEAVLPSPPTVPVIPVLPVPAENTVILPTIPQANPPPVLVNTDSLETPTY) is interaction with SH3 domains. 3 consecutive PDZ domains span residues 224 to 310 (EITL…VKRR), 319 to 405 (EIKL…VAKP), and 466 to 546 (KVVL…AQYR). The segment at 224–546 (EITLERGNSG…QAVTIVAQYR (323 aa)) is required for interaction with MARCHF2. At S232 the chain carries Phosphoserine. Y399 is modified (phosphotyrosine). Phosphoserine is present on residues S568, S573, S575, S579, S598, S619, S676, S684, S687, Q709, and S834. The SH3 domain occupies 581–651 (KRSLYVRALF…PSKRRVEKKE (71 aa)). The disordered stretch occupies residues 662-693 (SKTRDKGEIPDDMGSKGLKHVTSNASDSESSY). Over residues 682-693 (VTSNASDSESSY) the composition is skewed to polar residues. The region spanning 714–889 (TRPVIILGPM…IYNQVKQIIE (176 aa)) is the Guanylate kinase-like domain.

The protein belongs to the MAGUK family. In terms of assembly, homotetramer. Interacts (via guanylate kinase-like domain) with DLGAP1, DLGAP2, DLGAP3, DLGAP4 and MAP1A. Interacts (via guanylate kinase-like domain) with KIF13B. May interact with HTR2A. Interacts (via PDZ domains) with GRIA1. Interacts (via PDZ domains) with GRIN2A. Interacts (via PDZ domains) with KCND2 and KCND3. Interacts (via PDZ domains) with KCNA1, KCNA2, KCNA3 and KCNA4. Interacts (via PDZ domains) with ADGRA3. Interacts with KCNF1. Interacts with CAMK2. Interacts with cytoskeleton-associated protein EPB41. Interacts with cytoskeleton-associated protein EZR. Found in a complex with KCNA5 and CAV3. Found in a complex with APC and CTNNB1. Interacts (via PDZ domains) with APC. Interacts with CDH1 through binding to PIK3R1. Forms multiprotein complexes with CASK, LIN7A, LIN7B, LIN7C, APBA1, and KCNJ12. Interacts with TOPK. Forms a tripartite complex composed of DLG1, MPP7 and LIN7 (LIN7A or LIN7C). May interact with TJAP1. Interacts with PTEN. Interacts with FRMPD4 (via C-terminus). Interacts with LRFN1, LRFN2 and LRFN4. Interacts with SFPQ. Interacts (via PDZ domains) with ADGRA2 (via PDZ-binding motif). Interacts with ADAM10; this interaction recruits ADAM10 to the cell membrane during long-term depression in hippocampal neurons. Interacts with DGKI (via PDZ-binding motif). Interacts (via PDZ domains) with MARCHF2 (via PDZ domain); the interaction leads to DLG1 ubiqtuitination and degradation. Interacts (via N-terminus) with MPP3; this interaction connects CADM1 with DLG1 and links CADM1 with the regulatory subunit of phosphoinositide-3-kinase (PI3K) by forming a multiprotein complex and participates in cell spreading. As to quaternary structure, (Microbial infection) Interacts with HTLV-1 protein Tax. (Microbial infection) Interacts (via PDZ domains 1 and 2) with influenza A virus protein NS1; the interaction results in the translocation of DLG1 from the cell membrane to perinuclear puncta. Acts as a scaffold protein to facilitate the interaction between LIN7C and influenza A virus protein NS1; the interaction facilitates translocation of LIN7C to cytoplasmic puncta. In terms of assembly, (Microbial infection) Interacts with human papillomavirus 18/HPV-18 protein E6. Phosphorylated by MAPK12. Phosphorylation of Ser-232 regulates association with GRIN2A. Post-translationally, ubiquitinated; by MARCHF2 which results in its degradation. Abundantly expressed in atrial myocardium (at protein level). Expressed in lung fibroblasts, cervical epithelial and B-cells (at protein level). Expressed in the brain (at protein level). Widely expressed, with isoforms displaying different expression profiles.

The protein resides in the cell membrane. It localises to the basolateral cell membrane. The protein localises to the endoplasmic reticulum membrane. Its subcellular location is the postsynaptic density. It is found in the synapse. The protein resides in the sarcolemma. It localises to the apical cell membrane. The protein localises to the cell junction. Its subcellular location is the cytoplasm. Its function is as follows. Essential multidomain scaffolding protein required for normal development. Recruits channels, receptors and signaling molecules to discrete plasma membrane domains in polarized cells. Promotes epithelial cell layer barrier function via maintaining cell-cell adhesion. May also play a role in adherens junction assembly, signal transduction, cell proliferation, synaptogenesis and lymphocyte activation. Regulates the excitability of cardiac myocytes by modulating the functional expression of Kv4 channels. Functional regulator of Kv1.5 channel. During long-term depression in hippocampal neurons, it recruits ADAM10 to the plasma membrane. In Homo sapiens (Human), this protein is Disks large homolog 1.